Here is a 271-residue protein sequence, read N- to C-terminus: Cell surface glycoprotein CD200 receptor 2 (271 aa).

An N-terminal signal peptide occupies residues 1–23; the sequence is MSAPRLLISIIIMVSASSSSCMG. Topologically, residues 24 to 239 are extracellular; it reads GKQMTQNYST…TSGSPALSLL (216 aa). N-linked (GlcNAc...) asparagine glycosylation is found at Asn-30, Asn-39, Asn-86, Asn-92, Asn-189, and Asn-217. An Ig-like V-type domain is found at 46 to 132; that stretch reads MDINAVLCCP…YRGIVVTPDG (87 aa). The Ig-like C2-type domain occupies 133–221; that stretch reads NFHRGYHLQV…SHLTGNKSLS (89 aa). The cysteines at positions 160 and 209 are disulfide-linked. A helical transmembrane segment spans residues 240–260; the sequence is IILYVKLSLFVVILVTTGFVF. Residues 261–271 are Cytoplasmic-facing; that stretch reads FQRINHVRKVL.

Belongs to the CD200R family.

It is found in the membrane. In terms of biological role, may be a receptor for the CD200/OX2 cell surface glycoprotein. The polypeptide is Cell surface glycoprotein CD200 receptor 2 (CD200R1L) (Homo sapiens (Human)).